A 308-amino-acid polypeptide reads, in one-letter code: Ribosomal RNA small subunit methyltransferase H (308 aa).

S-adenosyl-L-methionine contacts are provided by residues 46–48 (AGH), aspartate 63, tyrosine 87, aspartate 108, and glutamine 115. The segment at 269–308 (TKRPVEASEEERGRNPRARSAKLRAAEKVAAPEGLPEVEV) is disordered. Residues 271–282 (RPVEASEEERGR) are compositionally biased toward basic and acidic residues.

Belongs to the methyltransferase superfamily. RsmH family.

The protein localises to the cytoplasm. It carries out the reaction cytidine(1402) in 16S rRNA + S-adenosyl-L-methionine = N(4)-methylcytidine(1402) in 16S rRNA + S-adenosyl-L-homocysteine + H(+). Specifically methylates the N4 position of cytidine in position 1402 (C1402) of 16S rRNA. The polypeptide is Ribosomal RNA small subunit methyltransferase H (Deinococcus geothermalis (strain DSM 11300 / CIP 105573 / AG-3a)).